A 222-amino-acid polypeptide reads, in one-letter code: UPF0441 protein CKO_04429 (222 aa).

Over residues 177–194 (TVPKTAMAPKPATTTTVT) the composition is skewed to low complexity. Positions 177 to 222 (TVPKTAMAPKPATTTTVTRGGFGESVAKQSTMQRSATGTSNRSMGG) are disordered. Residues 203–222 (AKQSTMQRSATGTSNRSMGG) show a composition bias toward polar residues.

It belongs to the UPF0441 family.

The protein is UPF0441 protein CKO_04429 of Citrobacter koseri (strain ATCC BAA-895 / CDC 4225-83 / SGSC4696).